Reading from the N-terminus, the 3942-residue chain is Protein bassoon (3942 aa).

Residues 1–158 form a disordered region; it reads MGNEASLEGG…PTSPYSVPQI (158 aa). Gly2 carries N-myristoyl glycine lipidation. The segment covering 9–29 has biased composition (gly residues); sequence GGAGEGPLPPGGSGLGPGPGA. The segment covering 31–52 has biased composition (low complexity); sequence KPPSALAGGGQLPVAGAARAAG. The segment covering 53–71 has biased composition (pro residues); sequence PPTPGLGPVPGPGPGPGPG. A 5 X 2 AA tandem repeats of P-G region spans residues 62 to 71; the sequence is PGPGPGPGPG. Polar residues-rich tracts occupy residues 85–98 and 127–154; these read SQRTTSPTPKQASA and QVDSRTQRSGRSPSVSPDRGSTPTSPYS. Phosphoserine is present on Ser142. An Omega-N-methylarginine modification is found at Arg145. 2 C4-type zinc fingers span residues 167-190 and 195-217; these read CPICKTSDLTSTPSQPNFNTCTQC and CNQCGFNPNPHLTQVKEWLCLNC. 2 disordered regions span residues 228–341 and 362–457; these read TTAP…EQTQ and LMSV…KTMP. Over residues 230–240 the composition is skewed to polar residues; sequence APRSKSQQQLH. Ser241 and Ser245 each carry phosphoserine. Polar residues predominate over residues 362–379; sequence LMSVQPEADTQGQPSPSK. Residues 395 to 407 show a composition bias toward pro residues; the sequence is PRPPGSGPGPGPT. 2 consecutive C4-type zinc fingers follow at residues 464–487 and 492–514; these read CPLCQAELNMGSRGPANYNTCTAC and CNLCGFNPTPHLVEKTEWLCLNC. Disordered stretches follow at residues 525-937, 950-1258, 1309-1553, and 1573-1625; these read GEPA…LQGG, GSYG…VAES, MDPM…WQQS, and RMVH…PSAG. Residues 528-541 show a composition bias toward pro residues; that stretch reads APLPLPTPQQPPAG. A run of 5 repeats spans residues 570 to 576, 577 to 583, 584 to 590, 591 to 597, and 598 to 604. The segment at 570 to 604 is 5 X 7 AA tandem repeats of K-A-S-P-Q-[AT]-[AT]; that stretch reads KASPQATKASPQATKASPQATKASPQTTKASPQAK. A compositionally biased stretch (polar residues) spans 573 to 600; the sequence is PQATKASPQATKASPQATKASPQTTKAS. Pro residues predominate over residues 632-645; that stretch reads VPKPPPETTVPPGT. The segment covering 684–693 has biased composition (polar residues); the sequence is QDLSRSPQSL. Residues 694 to 708 show a composition bias toward low complexity; that stretch reads SDTGYSSDGVSSSQS. Polar residues predominate over residues 709–718; the sequence is EITGVVQQEV. Acidic residues-rich tracts occupy residues 787–802 and 865–876; these read FDSDEELGDILEEDDS and SAEEDNLEEDDT. Residue Arg881 is modified to Omega-N-methylarginine. Residues 895-905 show a composition bias toward basic and acidic residues; the sequence is PRPESSQEPKR. A Phosphoserine modification is found at Ser980. Low complexity predominate over residues 994–1011; the sequence is PASTPSYTSGTSPTSLSS. The segment covering 1049 to 1062 has biased composition (acidic residues); it reads DSSEEEELREEEEL. 2 positions are modified to phosphoserine: Ser1050 and Ser1051. Residues 1063 to 1076 are compositionally biased toward basic and acidic residues; that stretch reads LREQEKMREVEQQR. At Ser1100 the chain carries Phosphoserine. Residue Thr1102 is modified to Phosphothreonine. 2 positions are modified to phosphoserine: Ser1108 and Ser1114. The segment covering 1117–1132 has biased composition (basic and acidic residues); the sequence is EELRQAAEMEELHRSS. Low complexity-rich tracts occupy residues 1133–1143 and 1173–1190; these read CSEYSPSPSLD and SPTETPSGSSTTPSSGRP. Basic and acidic residues predominate over residues 1192–1207; it reads KSAEEAYEDMMRKAEM. A compositionally biased stretch (low complexity) spans 1209–1219; sequence QRQQGQVAGAR. Residues 1226–1240 are compositionally biased toward polar residues; it reads SQPTGPRSQGSFEYQ. Ser1236 is modified (phosphoserine). Residues 1333–1343 are compositionally biased toward low complexity; it reads SFSTSTSSDSS. Thr1354 carries O-linked (GlcNAc) threonine glycosylation. The span at 1357 to 1366 shows a compositional bias: basic and acidic residues; the sequence is FAKEPQDPLK. A compositionally biased stretch (polar residues) spans 1370 to 1438; it reads SPVSSTLTSK…TTANYGSQTE (69 aa). Thr1395 carries O-linked (GlcNAc) threonine glycosylation. Phosphoserine occurs at positions 1482, 1491, and 1493. A compositionally biased stretch (low complexity) spans 1488–1498; sequence STPSESPTFSP. Polar residues-rich tracts occupy residues 1508-1522 and 1573-1609; these read EFSTQTPSLTLSSDI and RMVHASASTSPLCSPTDSQPTSHSYSQTTPPSASQMP. A glycan (O-linked (GlcNAc) serine) is linked at Ser1707. An omega-N-methylarginine mark is found at Arg1792 and Arg1796. At Arg1806 the chain carries Asymmetric dimethylarginine; alternate. Position 1806 is an omega-N-methylarginine; alternate (Arg1806). Arg1818 is modified (omega-N-methylarginine). 2 disordered regions span residues 1831–1865 and 1926–1977; these read GVGLKPGPVPEPGAEPHRATPAELRSHAPPGTRKP and PSAP…QRPY. The span at 1844–1856 shows a compositional bias: basic and acidic residues; that stretch reads AEPHRATPAELRS. A glycan (O-linked (GlcNAc) threonine) is linked at Thr1934. Ser1990 and Ser2046 each carry phosphoserine. Arg2051 and Arg2081 each carry omega-N-methylarginine. Asymmetric dimethylarginine occurs at positions 2255, 2265, and 2270. Thr2318 carries O-linked (GlcNAc) threonine glycosylation. 3 disordered regions span residues 2327 to 2378, 2476 to 2504, and 2524 to 2663; these read PVAP…KQQE, EQKQRQKAPFPATCEAPSRGPPPAATELA, and TEGP…STTA. Over residues 2329–2342 the composition is skewed to pro residues; the sequence is APAPGPAPAPPPGQ. Basic and acidic residues predominate over residues 2361–2378; the sequence is ASEKEEASQEDRQRKQQE. Coiled-coil stretches lie at residues 2366 to 2422 and 2453 to 2483; these read EASQ…LVQR and LAQQRLQLEQIQQLQQQLQLQLEEQKQRQKA. Thr2524 is a glycosylation site (O-linked (GlcNAc) threonine). Residues 2541–2551 are compositionally biased toward polar residues; the sequence is SSASDMSLQTE. Position 2578 is a phosphoserine (Ser2578). Residues Thr2595 and Thr2622 each carry the phosphothreonine modification. Residues 2643-2655 show a composition bias toward basic and acidic residues; it reads RHSDSGSDSKHDA. A glycan (O-linked (GlcNAc) threonine) is linked at Thr2700. The segment at 2730–3278 is interaction with DAO; the sequence is EPDGQAQGVA…GGVSGRPGKD (549 aa). 3 positions are modified to phosphoserine: Ser2811, Ser2860, and Ser2866. The segment at 2854–2874 is disordered; that stretch reads TLQRSLSDPKPLSPTAEESAK. An O-linked (GlcNAc) threonine glycan is attached at Thr2945. Ser3022 carries the phosphoserine modification. Disordered stretches follow at residues 3051–3409, 3431–3560, and 3581–3917; these read PATP…LTSR, YYGV…PRAH, and EAYH…KILP. The span at 3073–3083 shows a compositional bias: polar residues; that stretch reads TAGSSGPTQNG. The span at 3089-3114 shows a compositional bias: low complexity; sequence APTYTGPSTYPAPTYPPGTGYPAEPG. The segment covering 3202 to 3211 has biased composition (basic and acidic residues); that stretch reads KAPEHPRGSD. Positions 3212 to 3237 are enriched in polar residues; sequence RSSVSQSPAPTYPSDSHYTSLEQNVP. At Ser3301 the chain carries Phosphoserine. Composition is skewed to basic and acidic residues over residues 3330 to 3342 and 3372 to 3391; these read GDSDYRHGARADK and QGMEQKISKFSPIEEAKDVE. Ser3382 is modified (phosphoserine). A compositionally biased stretch (low complexity) spans 3447-3461; that stretch reads YGSSSRSRMASAYSG. Positions 3464–3487 are enriched in basic and acidic residues; sequence LSSHDYSSRGKGYERERDTAERLQ. Arg3502 is modified (omega-N-methylarginine). Low complexity predominate over residues 3520–3534; it reads PLGRPRPAGGALPPG. 2 stretches are compositionally biased toward basic and acidic residues: residues 3549 to 3560 and 3592 to 3602; these read VQEHVKDGPRAH and WFDKPRDARSD. Positions 3652 to 3665 are enriched in basic residues; sequence EHRHHSDHGRHSGR. Basic and acidic residues predominate over residues 3666-3690; the sequence is HAGEEPGRRAAKPHARDMGRHEARP. A compositionally biased stretch (low complexity) spans 3750–3820; the sequence is TQAQPQMQGR…QARLQPQSQP (71 aa). Arg3823 is modified (omega-N-methylarginine). Over residues 3835–3851 the composition is skewed to pro residues; it reads KPQPGPTTAPGPQPAGP. Over residues 3856–3891 the composition is skewed to low complexity; sequence QASSSKPPAAKAPQQGRAPQAQTTPGPGPAGAKPGA.

As to quaternary structure, interacts with PCLO, ERC2/CAST1, RIMS1 and UNC13A. Interacts with TPRG1L. Interacts with DYNLL1 and DYNLL2; these interactions potentially link PTVs to dynein and myosin V motor complexes. Interacts with ATG5; this interaction is important for the regulation of presynaptic autophagy. Interacts (via C-terminus) with TRIO (via N-terminus). Interacts with CTBP1. Interacts with SIAH1; this interaction negatively regulates SIAH1 E3 ligase activity. Interacts (via coiled region) with DAO; the interaction is direct. Myristoylated. The N-terminal myristoylation is not sufficient for presynaptic localization. In terms of tissue distribution, expressed in brain and retina.

It is found in the cytoplasm. Its subcellular location is the presynaptic active zone. The protein localises to the cytoskeleton. It localises to the cytoplasmic vesicle. The protein resides in the secretory vesicle. It is found in the synaptic vesicle membrane. Its function is as follows. Scaffold protein of the presynaptic cytomatrix at the active zone (CAZ) which is the place in the synapse where neurotransmitter is released. After synthesis, participates in the formation of Golgi-derived membranous organelles termed Piccolo-Bassoon transport vesicles (PTVs) that are transported along axons to sites of nascent synaptic contacts. At the presynaptic active zone, regulates the spatial organization of synaptic vesicle cluster, the protein complexes that execute membrane fusion and compensatory endocytosis. Also functions in processes other than assembly such as the regulation of specific presynaptic protein ubiquitination by interacting with SIAH1 or the regulation of presynaptic autophagy by associating with ATG5. Also mediates synapse to nucleus communication leading to reconfiguration of gene expression by associating with the transcriptional corepressor CTBP1 and by subsequently reducing the size of its pool available for nuclear import. Inhibits the activity of the proportion of DAO enzyme that localizes to the presynaptic active zone, which may modulate synaptic transmission. This Mus musculus (Mouse) protein is Protein bassoon.